Reading from the N-terminus, the 604-residue chain is MSGDVEVYLSQVHDGSVSSGFRALYEERLLLDVTLLIEEHHFQAHKALLATQSDYFRVMFTADMRERDQDKIHMKGLTAAGFGHVLRFMYYGSLELSMLTVQEILQAAMYVQLTEAVEFCCSFLLAKICLENCAEVMRLLEDFSVGVEGVQEQLDAFLLENFVPLMARPDFLSYLSLEKLMAYLDSDQLSRYPEIELYEAVQAWLRHDRRRWRHTDAVVQNLRFCLMTPANIFEKVKTSEFYRYSRQLRLEVDQALSYFHQVNEQPLAETKSNRIRSVRPQTAVFRGMIGHSMVNSKILLLHRPKVWWELEGPQVPLRPDCLAIVNNFAFLLGGEELGPDGEFHASSKVYRYDPRQNSWLRMADMSVPRSEFAVGVIGKYIYAVAGRTRDETFYSTERYDIVEDKWEFVDPYPVNKYGHEGTVLNGKLYITGGITSSSTSKQVCVFDPGREGSSEHRTRRTPILTNCWENKSKMNYARCFHKMISHNGKLYVFGGVCVILRASFESQGCPSTEVYDPETDEWTILASMPIGRSGHGVAVLDKQIMVLGGLCYNGHYSDSILTFDPEENKWKEDEYPRMPCKLDGLQVCSLHFPEYVLEHVRRCS.

In terms of domain architecture, BTB spans 31-98 (LDVTLLIEEH…MYYGSLELSM (68 aa)). Positions 133 to 237 (CAEVMRLLED…TPANIFEKVK (105 aa)) constitute a BACK domain. Kelch repeat units follow at residues 328–379 (FAFL…VIGK), 381–426 (IYAV…VLNG), 428–473 (LYIT…NKSK), 489–542 (KLYV…VLDK), and 544–592 (IMVL…SLHF).

Its subcellular location is the nucleus. It participates in protein modification; protein ubiquitination. Its function is as follows. Substrate-specific adapter for an E3 ubiquitin-protein ligase complex. The chain is Kelch-like protein 15 (klhl15) from Danio rerio (Zebrafish).